The chain runs to 365 residues: MFGGLSSWLGLKPPEGAAAEGEEPPSRDGDKLSAGAAPSEESPERPVEPTEEQQQQPPTEDPQFLHQAKGLGNYLYNFASAATKKITESVTETAQTIKKSVEEGKIDDILDKTILGDFQKEQKKFVEEQNTKKSEAAVPPWVESHDEETIQQQILALSADKRNFLRDPPAGVQFNFDFDQMYPVALVMLQEDELLSKMRFALVPKLVKEEVFWRNYFYRISLIKQSAQLTALAAQQQASGKEEKSSNRDDNLPLTEAVRPKTPPVVIKSQLKSQEDEEEISTSPGVSEFVSDAFDTCSLNQEDLRKEMEQLVLDKKQEEATALEEDSTDWEKELQQELQEYEVVAESEKRDENWDKEIEKMLQES.

Positions 1 to 65 (MFGGLSSWLG…QPPTEDPQFL (65 aa)) are disordered. A compositionally biased stretch (low complexity) spans 52 to 62 (EQQQQPPTEDP). The BSD domain maps to 172–224 (VQFNFDFDQMYPVALVMLQEDELLSKMRFALVPKLVKEEVFWRNYFYRISLIK). The interval 237–259 (QASGKEEKSSNRDDNLPLTEAVR) is disordered. Residues 240 to 251 (GKEEKSSNRDDN) are compositionally biased toward basic and acidic residues. At threonine 262 the chain carries Phosphothreonine. Phosphoserine is present on residues serine 283, serine 298, and serine 327. The segment at 344-365 (VAESEKRDENWDKEIEKMLQES) is disordered. The span at 346-365 (ESEKRDENWDKEIEKMLQES) shows a compositional bias: basic and acidic residues.

Interacts (via phosphorylated form and BSD domain) with AKT1; this interaction is enhanced in a mTORC2-mediated manner in response to epidermal growth factor (EGF) stimulation and activates AKT1. In terms of processing, phosphorylated. Phosphorylation increases in a mTORC2-mediated manner in response to epidermal growth factor (EGF) stimulation. Expressed in the liver, kidney, skeletal muscle and in white and brown adipose tissues. Expressed in the cortex, cerebellum, thalamus, hippocampus, braistem, olfactory bulb, spinal cord and striatum of the brain. Expressed in most neuropil regions containing glutamatergic synaptic terminals. Expressed in the CA1, CA2 and CA3 perikarya of the hippocampus. Expressed in neurons and Purkinje cells (at the protein level).

The protein localises to the cytoplasm. Its subcellular location is the perinuclear region. It localises to the golgi apparatus. It is found in the perikaryon. The protein resides in the cell projection. The protein localises to the axon. Its subcellular location is the dendrite. It localises to the growth cone. It is found in the presynaptic cell membrane. The protein resides in the postsynaptic cell membrane. The protein localises to the membrane. In terms of biological role, plays a role in adipocyte differentiation by promoting mTORC2-mediated phosphorylation of AKT1 at 'Ser-473' after growth factor stimulation. This is Synapse-associated protein 1 from Mus musculus (Mouse).